An 807-amino-acid polypeptide reads, in one-letter code: Phenylalanine--tRNA ligase beta subunit (807 aa).

In terms of domain architecture, tRNA-binding spans 39–153 (SARSQGVVVG…EIPAVGTPVA (115 aa)). The region spanning 407–491 (RTPVPLQLRR…RLVGFDKFGS (85 aa)) is the B5 domain. Positions 469, 475, 478, and 479 each coordinate Mg(2+). The 94-residue stretch at 713–806 (PTVPASERDL…LSKQFKAELR (94 aa)) folds into the FDX-ACB domain.

It belongs to the phenylalanyl-tRNA synthetase beta subunit family. Type 1 subfamily. As to quaternary structure, tetramer of two alpha and two beta subunits. Mg(2+) is required as a cofactor.

Its subcellular location is the cytoplasm. It catalyses the reaction tRNA(Phe) + L-phenylalanine + ATP = L-phenylalanyl-tRNA(Phe) + AMP + diphosphate + H(+). This chain is Phenylalanine--tRNA ligase beta subunit, found in Synechococcus sp. (strain CC9902).